The following is a 424-amino-acid chain: UDP-N-acetylglucosamine 1-carboxyvinyltransferase (424 aa).

22 to 23 serves as a coordination point for phosphoenolpyruvate; that stretch reads KN. R93 provides a ligand contact to UDP-N-acetyl-alpha-D-glucosamine. C117 (proton donor) is an active-site residue. 2-(S-cysteinyl)pyruvic acid O-phosphothioketal is present on C117. UDP-N-acetyl-alpha-D-glucosamine-binding positions include 122–126, D307, and V329; that span reads RPIDL.

This sequence belongs to the EPSP synthase family. MurA subfamily.

It is found in the cytoplasm. The catalysed reaction is phosphoenolpyruvate + UDP-N-acetyl-alpha-D-glucosamine = UDP-N-acetyl-3-O-(1-carboxyvinyl)-alpha-D-glucosamine + phosphate. The protein operates within cell wall biogenesis; peptidoglycan biosynthesis. Cell wall formation. Adds enolpyruvyl to UDP-N-acetylglucosamine. The polypeptide is UDP-N-acetylglucosamine 1-carboxyvinyltransferase (Pelodictyon phaeoclathratiforme (strain DSM 5477 / BU-1)).